The following is a 432-amino-acid chain: Glutamyl-tRNA reductase (432 aa).

Residues 49 to 52, serine 101, 106 to 108, and glutamine 112 contribute to the substrate site; these read TCNR and EPQ. The Nucleophile role is filled by cysteine 50. 181-186 is a binding site for NADP(+); that stretch reads GAGETI. The tract at residues 407–432 is disordered; sequence FPEKPGYQHPPIATPIVRTDDADPAP.

The protein belongs to the glutamyl-tRNA reductase family. In terms of assembly, homodimer.

It catalyses the reaction (S)-4-amino-5-oxopentanoate + tRNA(Glu) + NADP(+) = L-glutamyl-tRNA(Glu) + NADPH + H(+). The protein operates within porphyrin-containing compound metabolism; protoporphyrin-IX biosynthesis; 5-aminolevulinate from L-glutamyl-tRNA(Glu): step 1/2. In terms of biological role, catalyzes the NADPH-dependent reduction of glutamyl-tRNA(Glu) to glutamate 1-semialdehyde (GSA). The protein is Glutamyl-tRNA reductase of Xanthomonas oryzae pv. oryzae (strain MAFF 311018).